A 227-amino-acid polypeptide reads, in one-letter code: 7-cyano-7-deazaguanine synthase (227 aa).

7–17 (VSGGMDSLVAT) contributes to the ATP binding site. Residues C187, C195, C198, and C201 each contribute to the Zn(2+) site.

Belongs to the QueC family. Requires Zn(2+) as cofactor.

It catalyses the reaction 7-carboxy-7-deazaguanine + NH4(+) + ATP = 7-cyano-7-deazaguanine + ADP + phosphate + H2O + H(+). It functions in the pathway purine metabolism; 7-cyano-7-deazaguanine biosynthesis. Catalyzes the ATP-dependent conversion of 7-carboxy-7-deazaguanine (CDG) to 7-cyano-7-deazaguanine (preQ(0)). The protein is 7-cyano-7-deazaguanine synthase of Chlorobaculum tepidum (strain ATCC 49652 / DSM 12025 / NBRC 103806 / TLS) (Chlorobium tepidum).